Reading from the N-terminus, the 574-residue chain is Putative ABC transporter ATP-binding protein VV2_1533 (574 aa).

ABC transporter domains follow at residues 3–244 and 299–533; these read IEFS…GIRE and LDVR…ANLT. ATP contacts are provided by residues 37–44 and 332–339; these read GPSGSGKS and GKNGSGKS.

Belongs to the ABC transporter superfamily.

It localises to the cell inner membrane. Its function is as follows. Probably part of an ABC transporter complex. Responsible for energy coupling to the transport system. The protein is Putative ABC transporter ATP-binding protein VV2_1533 of Vibrio vulnificus (strain CMCP6).